Reading from the N-terminus, the 382-residue chain is Glutamine synthetase cytosolic isozyme (382 aa).

Residues 36–118 (GKICAEYVWI…VMCDCYEPPK (83 aa)) form the GS beta-grasp domain. The GS catalytic domain maps to 135–382 (TRFACAEVME…RLIVETTILL (248 aa)).

The protein belongs to the glutamine synthetase family. Homooctamer.

The protein localises to the cytoplasm. The catalysed reaction is L-glutamate + NH4(+) + ATP = L-glutamine + ADP + phosphate + H(+). The polypeptide is Glutamine synthetase cytosolic isozyme (GLN1) (Chlamydomonas reinhardtii (Chlamydomonas smithii)).